Reading from the N-terminus, the 246-residue chain is Orotidine 5'-phosphate decarboxylase (246 aa).

Substrate contacts are provided by residues D22, K44, D71–T80, T130, R191, Q201, G221, and R222. Catalysis depends on K73, which acts as the Proton donor.

This sequence belongs to the OMP decarboxylase family. Type 1 subfamily. Homodimer.

The enzyme catalyses orotidine 5'-phosphate + H(+) = UMP + CO2. Its pathway is pyrimidine metabolism; UMP biosynthesis via de novo pathway; UMP from orotate: step 2/2. Its function is as follows. Catalyzes the decarboxylation of orotidine 5'-monophosphate (OMP) to uridine 5'-monophosphate (UMP). This Neisseria meningitidis serogroup A / serotype 4A (strain DSM 15465 / Z2491) protein is Orotidine 5'-phosphate decarboxylase.